A 520-amino-acid polypeptide reads, in one-letter code: GMP synthase [glutamine-hydrolyzing] (520 aa).

The Glutamine amidotransferase type-1 domain occupies 13-205 (KIIVLDYGSQ…ALNICKAKGD (193 aa)). C90 serves as the catalytic Nucleophile. Catalysis depends on residues H179 and E181. Positions 206–395 (WSMDNFIDMQ…LGMPDHIVWR (190 aa)) constitute a GMPS ATP-PPase domain. 233–239 (SGGVDSS) contributes to the ATP binding site.

Homodimer.

The enzyme catalyses XMP + L-glutamine + ATP + H2O = GMP + L-glutamate + AMP + diphosphate + 2 H(+). It participates in purine metabolism; GMP biosynthesis; GMP from XMP (L-Gln route): step 1/1. Catalyzes the synthesis of GMP from XMP. This is GMP synthase [glutamine-hydrolyzing] from Streptococcus pneumoniae (strain ATCC 700669 / Spain 23F-1).